Here is a 532-residue protein sequence, read N- to C-terminus: T-complex protein 1 subunit epsilon (532 aa).

This sequence belongs to the TCP-1 chaperonin family. As to quaternary structure, component of the T-complex protein 1 (TCP1) complex.

It localises to the cytoplasm. In terms of biological role, molecular chaperone; assists the folding of proteins upon ATP hydrolysis. This chain is T-complex protein 1 subunit epsilon (CCT5), found in Encephalitozoon cuniculi (strain GB-M1) (Microsporidian parasite).